The primary structure comprises 119 residues: Acidic phospholipase A2 2 (119 aa).

7 cysteine pairs are disulfide-bonded: Cys-11/Cys-71, Cys-26/Cys-118, Cys-28/Cys-44, Cys-43/Cys-99, Cys-50/Cys-92, Cys-60/Cys-85, and Cys-78/Cys-90. Ca(2+) contacts are provided by Tyr-27, Gly-29, and Gly-31. Residue His-47 is part of the active site. Asp-48 provides a ligand contact to Ca(2+). Residue Asp-93 is part of the active site.

Belongs to the phospholipase A2 family. Group I subfamily. D49 sub-subfamily. In terms of assembly, homotrimer. The cofactor is Ca(2+). As to expression, expressed by the venom gland.

It is found in the secreted. It catalyses the reaction a 1,2-diacyl-sn-glycero-3-phosphocholine + H2O = a 1-acyl-sn-glycero-3-phosphocholine + a fatty acid + H(+). PLA2 catalyzes the calcium-dependent hydrolysis of the 2-acyl groups in 3-sn-phosphoglycerides. In Naja naja (Indian cobra), this protein is Acidic phospholipase A2 2.